The following is a 120-amino-acid chain: Large ribosomal subunit protein bL19c (120 aa).

Belongs to the bacterial ribosomal protein bL19 family.

It localises to the plastid. It is found in the chloroplast. The chain is Large ribosomal subunit protein bL19c from Thalassiosira pseudonana (Marine diatom).